Reading from the N-terminus, the 300-residue chain is Iodotyrosine deiodinase (300 aa).

A helical transmembrane segment spans residues 15–31 (VGLISVSIAAGVALGQL). Residues 110 to 114 (RRSVR), serine 138, and 138 to 139 (SG) each bind FMN. The 3,5-diiodo-L-tyrosine site is built by alanine 140, glutamate 167, tyrosine 171, and lysine 192. 3-iodo-L-tyrosine-binding residues include alanine 140, glutamate 167, tyrosine 171, and lysine 192. FMN is bound by residues 247–249 (TTT) and arginine 289.

The protein belongs to the nitroreductase family. It depends on FMN as a cofactor. In terms of processing, may be cleaved at Gln-55. The cleaved form retains catalytic activity.

It is found in the membrane. It catalyses the reaction 2 iodide + L-tyrosine + 2 NADP(+) = 3,5-diiodo-L-tyrosine + 2 NADPH + H(+). The catalysed reaction is iodide + L-tyrosine + NADP(+) = 3-iodo-L-tyrosine + NADPH. It carries out the reaction 3-iodo-L-tyrosine + iodide + NADP(+) = 3,5-diiodo-L-tyrosine + NADPH + H(+). The enzyme catalyses L-tyrosine + chloride + NADP(+) = 3-chloro-L-tyrosine + NADPH. It catalyses the reaction bromide + L-tyrosine + NADP(+) = 3-bromo-L-tyrosine + NADPH. Catalyzes the dehalogenation of halotyrosines such as 3,5-diiodo-L-tyrosine. Likely to also catalyze the dehalogenation of other halotyrosines such as 3-bromo-L-tyrosine, 3-chloro-L-tyrosine and 3-iodo-L-tyrosine. The chain is Iodotyrosine deiodinase from Daphnia pulex (Water flea).